Here is a 126-residue protein sequence, read N- to C-terminus: C-type natriuretic peptide 2 (126 aa).

The N-terminal stretch at methionine 1–threonine 22 is a signal peptide. Residues arginine 23 to lysine 102 constitute a propeptide that is removed on maturation. Residues serine 44–glycine 80 are disordered. Cysteine 110 and cysteine 126 are joined by a disulfide.

It belongs to the natriuretic peptide family. As to expression, brain and spinal cord.

The protein localises to the secreted. Its function is as follows. Exhibits natriuretic and vasodepressant activity. Has cGMP-stimulating activity. May help to regulate body fluid homeostasis in a variety of aquatic environments. This Oryzias latipes (Japanese rice fish) protein is C-type natriuretic peptide 2.